Consider the following 196-residue polypeptide: Alpha-crystallin A chain (196 aa).

At M1 the chain carries N-acetylmethionine. Residues 1–63 form a required for complex formation with BFSP1 and BFSP2 region; sequence MDVTIQHPWF…RTVLDSGISE (63 aa). The residue at position 6 (Q6) is a Deamidated glutamine; partial. Phosphoserine is present on S45. A Deamidated glutamine; partial modification is found at Q50. The sHSP domain occupies 76–185; that stretch reads HAGNPKNNPV…GHSERAIPVS (110 aa). N6-acetyllysine is present on residues K93 and K122. H123 lines the Zn(2+) pocket. Deamidated asparagine; partial is present on N124. Positions 125 and 130 each coordinate Zn(2+). A Phosphoserine modification is found at S145. N146 bears the Deamidated asparagine; partial mark. Positions 168-196 are disordered; the sequence is KVQSGLDAGHSERAIPVSREEKPSSAPSS. Q170 carries the deamidated glutamine; partial modification. The span at 176–190 shows a compositional bias: basic and acidic residues; sequence GHSERAIPVSREEKP. H177 is a Zn(2+) binding site. S185 carries an O-linked (GlcNAc) serine glycan.

The protein belongs to the small heat shock protein (HSP20) family. As to quaternary structure, heteropolymer composed of three CRYAA and one CRYAB subunits. Inter-subunit bridging via zinc ions enhances stability, which is crucial as there is no protein turn over in the lens. Can also form homodimers and homotetramers (dimers of dimers) which serve as the building blocks of homooligomers. Within homooligomers, the zinc-binding motif is created from residues of 3 different molecules. His-123 and Glu-125 from one molecule are ligands of the zinc ion, and His-130 and His-177 residues from additional molecules complete the site with tetrahedral coordination geometry. Part of a complex required for lens intermediate filament formation composed of BFSP1, BFSP2 and CRYAA. Acetylation at Lys-93 may increase chaperone activity. In terms of processing, undergoes age-dependent proteolytical cleavage at the C-terminus.

It is found in the cytoplasm. The protein localises to the nucleus. Its function is as follows. Contributes to the transparency and refractive index of the lens. Acts as a chaperone, preventing aggregation of various proteins under a wide range of stress conditions. Required for the correct formation of lens intermediate filaments as part of a complex composed of BFSP1, BFSP2 and CRYAA. In Mus musculus (Mouse), this protein is Alpha-crystallin A chain (Cryaa).